A 630-amino-acid chain; its full sequence is Prolactin receptor (630 aa).

Residues 1 to 23 (MMTKVGEVLLLLLLPAFVPHTDG) form the signal peptide. The Extracellular segment spans residues 24 to 234 (THYSLPGKPT…VKVPEYLHRE (211 aa)). Fibronectin type-III domains follow at residues 31 to 128 (KPTE…IVQP) and 130 to 230 (PPEK…VPEY). 2 disulfides stabilise this stretch: Cys-37/Cys-47 and Cys-76/Cys-87. Residues Asn-92 and Asn-101 are each glycosylated (N-linked (GlcNAc...) asparagine). Residues Asp-212 and His-213 each coordinate Zn(2+). A WSXWS motif motif is present at residues 216–220 (WSEWS). A helical transmembrane segment spans residues 235–258 (KSVWILVLVFSAFILLLLTWLIHM). Over 259-630 (NSHSLKHCML…DTATVFSVHT (372 aa)) the chain is Cytoplasmic. The short motif at 267–275 (MLPPVPGPK) is the Box 1 motif element. The segment at 339-389 (KSIGSASDSDSGRGSCDSDNLLMDKSGAPKEEQQQQNQEGDQIGKETQGPK) is disordered. The segment covering 340–357 (SIGSASDSDSGRGSCDSD) has biased composition (low complexity). A compositionally biased stretch (basic and acidic residues) spans 380 to 389 (QIGKETQGPK).

It belongs to the type I cytokine receptor family. Type 1 subfamily.

The protein localises to the membrane. Its function is as follows. This is a receptor for the anterior pituitary hormone prolactin. The protein is Prolactin receptor (prlr) of Oreochromis niloticus (Nile tilapia).